The primary structure comprises 444 residues: Serine carboxypeptidase 2 (444 aa).

Asparagine 60–glycine 62 lines the substrate pocket. 3 cysteine pairs are disulfide-bonded: cysteine 65–cysteine 324, cysteine 222–cysteine 234, and cysteine 258–cysteine 291. N-linked (GlcNAc...) asparagine glycans are attached at residues asparagine 116 and asparagine 127. Glutamate 157 to tyrosine 159 serves as a coordination point for substrate. Residue serine 158 is part of the active site. N-linked (GlcNAc...) asparagine glycosylation occurs at asparagine 259. Residues isoleucine 260 to glycine 286 constitute a propeptide, linker peptide. N-linked (GlcNAc...) asparagine glycosylation is found at asparagine 312 and asparagine 318. Catalysis depends on residues aspartate 361 and histidine 413. Arginine 409 to histidine 413 is a substrate binding site.

This sequence belongs to the peptidase S10 family. As to quaternary structure, carboxypeptidase II is a dimer, where each monomer is composed of two chains linked by a disulfide bond. In terms of processing, N-glycosylated.

The catalysed reaction is Preferential release of a C-terminal arginine or lysine residue.. This chain is Serine carboxypeptidase 2 (CBP2), found in Triticum aestivum (Wheat).